The chain runs to 732 residues: Wall-associated receptor kinase 2 (732 aa).

The N-terminal stretch at 1–23 (MKVQEGLFVVAVFYLAYTQLVKG) is a signal peptide. Residues 24–329 (QPRKECQTRC…RKVRPEYFRW (306 aa)) lie on the Extracellular side of the membrane. Asn-57, Asn-75, Asn-111, Asn-154, Asn-217, and Asn-246 each carry an N-linked (GlcNAc...) asparagine glycan. Residues 230-277 (GDKTCKQVEYRGVCGGNSTCFDSTGGTGYNCKCLEGFEGNPYLPNGCQ) form the EGF-like 1 domain. Disulfide bonds link Cys-234/Cys-249, Cys-243/Cys-260, Cys-262/Cys-276, Cys-282/Cys-295, Cys-289/Cys-304, and Cys-306/Cys-318. The EGF-like 2; calcium-binding domain maps to 278–319 (DINECISSRHNCSEHSTCENTKGSFNCNCPSGYRKDSLNSCT). N-linked (GlcNAc...) asparagine glycosylation occurs at Asn-288. The chain crosses the membrane as a helical span at residues 330–350 (TQIFLGTTIGFSVIMLGISCL). Residues 351–732 (QQKIKHRKNT…VTTLDIEAGR (382 aa)) lie on the Cytoplasmic side of the membrane. Position 393 is a phosphothreonine (Thr-393). The region spanning 404–677 (YHESRILGQG…KEVAAELEAL (274 aa)) is the Protein kinase domain. ATP-binding positions include 410 to 418 (LGQGGQGTV) and Lys-432. Tyr-477 bears the Phosphotyrosine mark. Asp-529 acts as the Proton acceptor in catalysis. A phosphothreonine mark is found at Thr-563 and Thr-568. Tyr-576 carries the phosphotyrosine modification.

Belongs to the protein kinase superfamily. Ser/Thr protein kinase family. Predominantly expressed in green tissues such as stems and leaves. Detected at organ junctions.

The protein localises to the membrane. The enzyme catalyses L-seryl-[protein] + ATP = O-phospho-L-seryl-[protein] + ADP + H(+). It catalyses the reaction L-threonyl-[protein] + ATP = O-phospho-L-threonyl-[protein] + ADP + H(+). In terms of biological role, serine/threonine-protein kinase that may function as a signaling receptor of extracellular matrix component. Binding to pectin may have significance in the control of cell expansion, morphogenesis and development. The protein is Wall-associated receptor kinase 2 (WAK2) of Arabidopsis thaliana (Mouse-ear cress).